A 468-amino-acid polypeptide reads, in one-letter code: uncharacterized protein (468 aa).

6 consecutive transmembrane segments (helical) span residues 59 to 79 (IPIV…ALFI), 135 to 155 (TWIN…LLLV), 215 to 235 (VFPF…LSIL), 297 to 317 (THCC…MVLV), 348 to 368 (HFIP…LVSY), and 385 to 405 (VFTV…IILF).

The protein resides in the membrane. This is an uncharacterized protein from Caenorhabditis elegans.